A 1195-amino-acid polypeptide reads, in one-letter code: EST/SMG-like protein 2 (1195 aa).

Composition is skewed to polar residues over residues 1–10, 18–35, and 55–68; these read MPETSVQNPL, TRSM…SATP, and VLNP…SNSV. Disordered regions lie at residues 1–38, 55–130, 179–268, and 610–643; these read MPET…PSFP, VLNP…VGIT, SKSE…PASN, and DKKE…DEIM. Composition is skewed to basic and acidic residues over residues 83-109 and 197-208; these read RFSD…EKNP and INDKDNSARDQD. 2 stretches are compositionally biased toward low complexity: residues 210-252 and 619-629; these read NNSG…NNSD and NNDSSVTESST. The 140-residue stretch at 1025-1164 folds into the PINc domain; it reads TYFVFDATSW…LISDDDAMKK (140 aa).

As to quaternary structure, transiently interacts with PEX14.

The protein resides in the cytoplasm. It localises to the nucleus. The protein localises to the peroxisome. Functionally, may be involved in the regulation of gene expression responses of environment-sensing pathways. The polypeptide is EST/SMG-like protein 2 (Saccharomyces cerevisiae (strain ATCC 204508 / S288c) (Baker's yeast)).